A 319-amino-acid polypeptide reads, in one-letter code: Oxaloacetate tautomerase fahd2, mitochondrial (319 aa).

The N-terminal 31 residues, Met1–Ser31, are a transit peptide targeting the mitochondrion. Glu164, Glu166, and Asp195 together coordinate Mg(2+).

Belongs to the FAH family. The cofactor is Mg(2+). It depends on Mn(2+) as a cofactor.

The protein resides in the mitochondrion. It catalyses the reaction oxaloacetate = enol-oxaloacetate. Its function is as follows. Tautomerase that converts enol-oxaloacetate, a strong inhibitor of succinate dehydrogenase, to the physiological keto form of oxaloacetate. It is thereby required to maximize aerobic respiration efficiency by preventing succinate dehydrogenase inhibition. The protein is Oxaloacetate tautomerase fahd2, mitochondrial (fahd2) of Xenopus laevis (African clawed frog).